The following is a 613-amino-acid chain: MDLEEKLARLPDHPGVYIMHDANGAIIYVGKAASLRNRVRSYFRGQHQPRTQAMVSHVADFEYILTDNEVEALILECNLIKQHRPRYNVSLKDDKSYPYIKITTQEDFPRIQITRSVTRDGSRYFGPYTSAGSLKETLKLLRGLFPIRTCRDTPLQPRSRPCLNAHIGRCLAPCAGQVDRETYREAVDNVIMFLEGRHTALVKELKEQMEAAAARLEFEKAARLRDQLRAVQEVCEKQKLAAASGEDADAIAFAREGEAALGLIFFSRGGKVIGRDHFFLTGSEGLSRGEVMAALLKEYYSRGVEIPPEILLHDEPEDAATIASWLSRLRGGRVNLRVPKRGTKLKLLRLVHENAVSLLQEHLLTRRRQEEGSRAALLELQEILELPRLPRRMEAYDISNFQGSSQVGAMAVFVDGRPLPSAYRRFQIKTVRGPNDFASLQEVLSRRFRRAAEQDPHFADLPDFVLIDGGLGQLHAARETMEAMGVGYIPTFGLAKEEELLFRVGTSEPIRLPRESKALQILQHLRDEVHRFAITYHRQKREKTAYRSVLDDIPGVGPKRKKALLRHFGSVAAISKATLEDLLAVEGMNRTVAARILAGLGRRSDGEDSTGSP.

One can recognise a GIY-YIG domain in the interval 12–89; sequence DHPGVYIMHD…IKQHRPRYNV (78 aa). The UVR domain occupies 199–234; sequence TALVKELKEQMEAAAARLEFEKAARLRDQLRAVQEV.

It belongs to the UvrC family. As to quaternary structure, interacts with UvrB in an incision complex.

The protein localises to the cytoplasm. Functionally, the UvrABC repair system catalyzes the recognition and processing of DNA lesions. UvrC both incises the 5' and 3' sides of the lesion. The N-terminal half is responsible for the 3' incision and the C-terminal half is responsible for the 5' incision. This is UvrABC system protein C from Moorella thermoacetica (strain ATCC 39073 / JCM 9320).